We begin with the raw amino-acid sequence, 535 residues long: Methylmalonate-semialdehyde/malonate-semialdehyde dehydrogenase [acylating], mitochondrial (535 aa).

Residues 1–32 (MAAAVAAAAAMRSRILQVSSKVNATWYPASSF) constitute a mitochondrion transit peptide. Lys-47, Lys-52, Lys-55, and Lys-76 each carry N6-acetyllysine; alternate. N6-succinyllysine; alternate is present on residues Lys-47, Lys-52, Lys-55, and Lys-76. N6-acetyllysine is present on Lys-87. Lys-117 and Lys-129 each carry N6-acetyllysine; alternate. N6-succinyllysine; alternate occurs at positions 117 and 129. Ala-183, Phe-185, Lys-209, Glu-212, Arg-213, and Ser-262 together coordinate NAD(+). Ser-262 carries the post-translational modification Phosphoserine. At Lys-298 the chain carries N6-acetyllysine. Cys-317 functions as the Nucleophile in the catalytic mechanism. N6-acetyllysine is present on residues Lys-330 and Lys-331. 2 positions are modified to N6-acetyllysine; alternate: Lys-364 and Lys-376. 2 positions are modified to N6-succinyllysine; alternate: Lys-364 and Lys-376. Ser-380 is subject to Phosphoserine. N6-succinyllysine is present on Lys-391. Glu-417 contacts NAD(+). Lys-500 bears the N6-acetyllysine mark. Lys-517 is modified (N6-succinyllysine).

This sequence belongs to the aldehyde dehydrogenase family. Homotetramer. In terms of processing, acetylation of Lys-55; Lys-117 and Lys-331 is observed in liver mitochondria from fasted mice but not from fed mice.

The protein localises to the mitochondrion. The catalysed reaction is 3-oxopropanoate + NAD(+) + CoA + H2O = hydrogencarbonate + acetyl-CoA + NADH + H(+). The enzyme catalyses 2-methyl-3-oxopropanoate + NAD(+) + CoA + H2O = propanoyl-CoA + hydrogencarbonate + NADH + H(+). It carries out the reaction (R)-2-methyl-3-oxopropanoate + NAD(+) + CoA + H2O = propanoyl-CoA + hydrogencarbonate + NADH + H(+). It catalyses the reaction (S)-2-methyl-3-oxopropanoate + NAD(+) + CoA + H2O = propanoyl-CoA + hydrogencarbonate + NADH + H(+). In terms of biological role, malonate and methylmalonate semialdehyde dehydrogenase involved in the catabolism of valine, thymine, and compounds catabolized by way of beta-alanine, including uracil and cytidine. This Mus musculus (Mouse) protein is Methylmalonate-semialdehyde/malonate-semialdehyde dehydrogenase [acylating], mitochondrial.